We begin with the raw amino-acid sequence, 436 residues long: Xylose isomerase (436 aa).

Active-site residues include His-100 and Asp-103. Mg(2+) is bound by residues Glu-231, Glu-267, His-270, Asp-295, Asp-306, Asp-308, and Asp-338.

This sequence belongs to the xylose isomerase family. In terms of assembly, homotetramer. Mg(2+) serves as cofactor.

It localises to the cytoplasm. It carries out the reaction alpha-D-xylose = alpha-D-xylulofuranose. The protein is Xylose isomerase of Chelativorans sp. (strain BNC1).